The sequence spans 182 residues: Adenine phosphoribosyltransferase (182 aa).

Belongs to the purine/pyrimidine phosphoribosyltransferase family. In terms of assembly, homodimer.

The protein localises to the cytoplasm. The catalysed reaction is AMP + diphosphate = 5-phospho-alpha-D-ribose 1-diphosphate + adenine. The protein operates within purine metabolism; AMP biosynthesis via salvage pathway; AMP from adenine: step 1/1. Catalyzes a salvage reaction resulting in the formation of AMP, that is energically less costly than de novo synthesis. This chain is Adenine phosphoribosyltransferase, found in Pseudomonas paraeruginosa (strain DSM 24068 / PA7) (Pseudomonas aeruginosa (strain PA7)).